An 87-amino-acid polypeptide reads, in one-letter code: UPF0473 protein Daud_0916 (87 aa).

The protein belongs to the UPF0473 family.

The sequence is that of UPF0473 protein Daud_0916 from Desulforudis audaxviator (strain MP104C).